The following is an 851-amino-acid chain: M-phase phosphoprotein 8 (851 aa).

A disordered region spans residues 21-54; it reads NIGRSPEVEGGGAAGEEKDAATKGTVAVGDSEED. Phosphoserine occurs at positions 51, 85, and 136. The Chromo domain occupies 59-118; it reads FEVERILDMKCEGGKNLYKVRWKGYTSDDDTWEPEVHLEDCKEVLLEFRKKVAENKAKAV. Residues 80-87 form a histone H3K9me3 binding region; it reads WKGYTSDD. The tract at residues 133–174 is disordered; sequence EADSDIDQQGDTKEDTSPRKKKKKIKYKEDKSPDDLRKKRAK. Phosphothreonine is present on Thr144. Phosphoserine; by CDK1 is present on residues Ser149 and Ser164. A compositionally biased stretch (basic and acidic residues) spans 159 to 169; that stretch reads YKEDKSPDDLR. Residues Ser188, Ser263, Ser267, and Ser274 each carry the phosphoserine modification. The disordered stretch occupies residues 240 to 302; that stretch reads REDVKDNRKT…KTGQDTVQES (63 aa). Positions 269 to 278 are enriched in acidic residues; the sequence is TLEDESEDFL. A compositionally biased stretch (basic and acidic residues) spans 279 to 295; sequence SDNKEKQNVRTAKDKTG. Ser313 is modified (phosphoserine). The segment at 315-428 is disordered; the sequence is EEAGTRVRRK…DKEEKARKEP (114 aa). The span at 329-364 shows a compositional bias: basic and acidic residues; sequence RKFEEPKEIKKLENTNNFLERKMIPKKQRNQDKGRS. Residue Thr379 is modified to Phosphothreonine; by CDK1. 2 positions are modified to phosphoserine: Ser386 and Ser394. A compositionally biased stretch (basic and acidic residues) spans 401–428; sequence EKERKNEPKEKYQKRYDFDKEEKARKEP. Thr447 bears the Phosphothreonine mark. 4 ANK repeats span residues 591–620, 624–653, 657–686, and 690–719; these read TGMTLVMLAAAGGQDDLLRLLITKGAKVNG, NGTTALIHAAEKNFLTTVAILLEAGAFVNV, NGETALMKACKRGNSDIVRLVIECGADCNI, and HQNSALYFAKQCNNVLVYELLKSHLETLSR.

As to quaternary structure, homodimer. Interacts (via chromo domain) with histone H3K9me3. Has the highest affinity for H3K9me3, and lesser affinity for H3K9me2 and H3K9me1. Component of the HUSH complex; at least composed of TASOR, PPHLN1 and MPHOSPH8. Interacts with DNMT3, EHMT1 and SETDB1. Interacts with MORC2; the interaction associateS MORC2 with the HUSH complex which recruits MORC2 to heterochromatic loci. Interacts with ZNF638; leading to recruitment of the HUSH complex to unintegrated retroviral DNA. Interacts with TASOR. Post-translationally, phosphorylated in M (mitotic) phase. Phosphorylation by CDK1 promotes dissociation from chromatin.

The protein resides in the nucleus. It is found in the chromosome. In terms of biological role, heterochromatin component that specifically recognizes and binds methylated 'Lys-9' of histone H3 (H3K9me) and promotes recruitment of proteins that mediate epigenetic repression. Mediates recruitment of the HUSH complex to H3K9me3 sites: the HUSH complex is recruited to genomic loci rich in H3K9me3 and is required to maintain transcriptional silencing by promoting recruitment of SETDB1, a histone methyltransferase that mediates further deposition of H3K9me3, as well as MORC2. Binds H3K9me and promotes DNA methylation by recruiting DNMT3A to target CpG sites; these can be situated within the coding region of the gene. Mediates down-regulation of CDH1 expression. Also represses L1 retrotransposons in collaboration with MORC2 and, probably, SETDB1, the silencing is dependent of repressive epigenetic modifications, such as H3K9me3 mark. Silencing events often occur within introns of transcriptionally active genes, and lead to the down-regulation of host gene expression. The HUSH complex is also involved in the silencing of unintegrated retroviral DNA by being recruited by ZNF638: some part of the retroviral DNA formed immediately after infection remains unintegrated in the host genome and is transcriptionally repressed. The sequence is that of M-phase phosphoprotein 8 from Rattus norvegicus (Rat).